Consider the following 233-residue polypeptide: 7-cyano-7-deazaguanine synthase (233 aa).

Residue 7–17 (LSGGLDSAVTS) coordinates ATP. Zn(2+) contacts are provided by Cys-195, Cys-206, Cys-209, and Cys-212.

The protein belongs to the QueC family. Zn(2+) serves as cofactor.

It catalyses the reaction 7-carboxy-7-deazaguanine + NH4(+) + ATP = 7-cyano-7-deazaguanine + ADP + phosphate + H2O + H(+). Its pathway is purine metabolism; 7-cyano-7-deazaguanine biosynthesis. Functionally, catalyzes the ATP-dependent conversion of 7-carboxy-7-deazaguanine (CDG) to 7-cyano-7-deazaguanine (preQ(0)). This Methanococcus maripaludis (strain C6 / ATCC BAA-1332) protein is 7-cyano-7-deazaguanine synthase.